The following is a 719-amino-acid chain: MATSPAEPSAGPAARGEAAAATEEQEEEARQLLQTLQAAEGEAAAAGAGDAAAAADSGSPSGPGSPRETVTEVPTGLRFSPEQVACVCEALLQAGHAGRLSRFLGALPPAERLRGSDPVLRARALVAFQRGEYAELYQLLESRPFPAAHHAFLQDLYLRARYHEAERARGRALGAVDKYRLRKKFPLPKTIWDGEETVYCFKERSRAALKACYRGNRYPTPDEKRRLATLTGLSLTQVSNWFKNRRQRDRTGTGGGAPCKSESDGNPTTEDESSRSPEDLERGVASMAAEAPAQSSIFLAGATSPATCPASSSILVNGSFLAASSPPAVLLNGSPVIINSLALGENSSLGPLLLTGGSAPQPQPSLQGVSEAKNSLVLDPQTGEVRLDEAQSEAPETKGVHGTTGEEIPGALPQVVPGPPPASTFPLTPGAVPAVAAPQVVPLSPSSGYPTGLSPTSPRLNLPQVVPTSQVVTLPQAVGPLQLLAAGPGSPVKVAAAAGPTNVHLINSSVGVTALQLPSSTAPGNFLLANPVSGSPIVTGVAVQQGKIILTATFPTSMLVSQVLPPAPSLALPLKQEPAITVPEGALPVGPSPTLPEGHTLGPISTQPLPPASVVTSGTSLPFSPDSSGLLSSFSAPLPEGLMLSPAAVPVWPAGLELSTGVEGLGTQATHTVLRLPDPDPQGLLLGATTGTEVDEGLEAEAKVLTQLQSVPVEEPLEL.

2 stretches are compositionally biased toward low complexity: residues 1 to 22 and 31 to 65; these read MATS…AAAT and QLLQ…GPGS. Disordered regions lie at residues 1 to 73 and 241 to 287; these read MATS…VTEV and WFKN…VASM. A DNA-binding region (homeobox) is located at residues 194-253; that stretch reads GEETVYCFKERSRAALKACYRGNRYPTPDEKRRLATLTGLSLTQVSNWFKNRRQRDRTGT. Positions 272-282 are enriched in basic and acidic residues; that stretch reads ESSRSPEDLER.

The protein belongs to the SIX/Sine oculis homeobox family. As to quaternary structure, probably binds DNA dimer. Interacts with EYA3, and probably EYA1 and EYA2.

The protein resides in the nucleus. In terms of biological role, transcription factor that is thought to be involved in regulation of organogenesis. May be involved in determination and maintenance of retina formation. Binds a 5'-GGTGTCAG-3' motif present in the ARE regulatory element of ATP1A1. Binds a 5'-TCA[AG][AG]TTNC-3' motif present in the MEF3 element in the myogenin promoter, and in the IGFBP5 promoter. Thought to be regulated by association with Dach and Eya proteins, and seems to be coactivated by EYA1, EYA2 and EYA3. The sequence is that of Homeobox protein SIX5 (Six5) from Mus musculus (Mouse).